A 72-amino-acid polypeptide reads, in one-letter code: Translation initiation factor IF-1 (72 aa).

The S1-like domain occupies 1-72 (MSKDDCIEFE…TKGRIIYRMK (72 aa)).

The protein belongs to the IF-1 family. As to quaternary structure, component of the 30S ribosomal translation pre-initiation complex which assembles on the 30S ribosome in the order IF-2 and IF-3, IF-1 and N-formylmethionyl-tRNA(fMet); mRNA recruitment can occur at any time during PIC assembly.

The protein resides in the cytoplasm. Its function is as follows. One of the essential components for the initiation of protein synthesis. Stabilizes the binding of IF-2 and IF-3 on the 30S subunit to which N-formylmethionyl-tRNA(fMet) subsequently binds. Helps modulate mRNA selection, yielding the 30S pre-initiation complex (PIC). Upon addition of the 50S ribosomal subunit IF-1, IF-2 and IF-3 are released leaving the mature 70S translation initiation complex. The chain is Translation initiation factor IF-1 from Xylella fastidiosa (strain 9a5c).